We begin with the raw amino-acid sequence, 362 residues long: MSGNGFGHLFRFTTFGESHGPAIGCVVDGVPARIPLTEADIQHYLDQRKPGQNRFTTQRREPDEVKILSGVFEGLTTGTSIGLLIENTDQRSKDYGEIKDTYRPGHADWVYQQKYGIRDYRGGGRSSARETAMRVAAGAIARKVLDALAPGLSIRGAMVQMGPHAIDRSRWDWAELGNNPFWCPDGAAAKSWEEYLDTIRKSGSSIGGVVEVVASGVPVGLGAPVYDKLDADLAKAMMSINAVKGVEIGDGFAAAALSGEENADEMRMGNDGQVGFLSNHAGGILGGISTGQDVVVRLAVKPTSSILTPKQSVDAKGNNVEVSTKGRHDPCVAIRAVPVAEAMMACTLADHLLRSLAQPRLS.

2 residues coordinate NADP(+): arginine 48 and arginine 54. FMN-binding positions include 125–127 (RSS), 241–242 (NA), glycine 286, 301–305 (KPTSS), and arginine 327.

The protein belongs to the chorismate synthase family. As to quaternary structure, homotetramer. FMNH2 is required as a cofactor.

It catalyses the reaction 5-O-(1-carboxyvinyl)-3-phosphoshikimate = chorismate + phosphate. Its pathway is metabolic intermediate biosynthesis; chorismate biosynthesis; chorismate from D-erythrose 4-phosphate and phosphoenolpyruvate: step 7/7. In terms of biological role, catalyzes the anti-1,4-elimination of the C-3 phosphate and the C-6 proR hydrogen from 5-enolpyruvylshikimate-3-phosphate (EPSP) to yield chorismate, which is the branch point compound that serves as the starting substrate for the three terminal pathways of aromatic amino acid biosynthesis. This reaction introduces a second double bond into the aromatic ring system. The chain is Chorismate synthase from Paramagnetospirillum magneticum (strain ATCC 700264 / AMB-1) (Magnetospirillum magneticum).